Here is a 435-residue protein sequence, read N- to C-terminus: Arginine biosynthesis bifunctional protein ArgJ, mitochondrial (435 aa).

Positions 167, 193, 204, 291, 430, and 435 each coordinate substrate. Residue Thr204 is the Nucleophile of the active site.

This sequence belongs to the ArgJ family. As to quaternary structure, heterodimer of an alpha and a beta chain. Post-translationally, the alpha and beta chains are autoproteolytically processed from a single precursor protein within the mitochondrion.

The protein resides in the mitochondrion matrix. The catalysed reaction is N(2)-acetyl-L-ornithine + L-glutamate = N-acetyl-L-glutamate + L-ornithine. It carries out the reaction L-glutamate + acetyl-CoA = N-acetyl-L-glutamate + CoA + H(+). The protein operates within amino-acid biosynthesis; L-arginine biosynthesis; L-ornithine and N-acetyl-L-glutamate from L-glutamate and N(2)-acetyl-L-ornithine (cyclic): step 1/1. It participates in amino-acid biosynthesis; L-arginine biosynthesis; N(2)-acetyl-L-ornithine from L-glutamate: step 1/4. Its function is as follows. Catalyzes two activities which are involved in the cyclic version of arginine biosynthesis: the synthesis of acetylglutamate from glutamate and acetyl-CoA, and of ornithine by transacetylation between acetylornithine and glutamate. This is Arginine biosynthesis bifunctional protein ArgJ, mitochondrial from Heterostelium pallidum (strain ATCC 26659 / Pp 5 / PN500) (Cellular slime mold).